Consider the following 848-residue polypeptide: AFGSMSVADLGSLTRLEDKIRLLQEDLESERELRNRIERERADLSVQLIALTDRLEDAEGTTDSQIESNRKREAELQKLRKLLEESQLENEDAMNVLRKKHQDACLDYAEQIEQLQKKNSKIDRERQRLQHEVIELTATIDQLQKDKHLAEKAAERFEAQTIELSNKVEDLNRHVNDLAQQRQRLQAENNDLLKEIHDQKVQLDNLQHVKYQLAQQLEEARRRLEDAERERSQLQAQLHQVQLELDSVRTALDEESAARAEAEHKLALANTEITQWKSKFDAEVALHHEEVEDLRKKMLQKQAEYEEQIEIMLQKISQLEKAKSRLQSEVEVLIVDLEKAQNTIAILERAKEQLEKTVNELKVRIDELTVELEAAQREARAALAELQKMKNLYEKAIEQKEALARENKKLQDDLHEAKEALADANRKLHELDLENARLAGEIRELQTALKESEAARRDAENRAQRALAELQQLRIEMERRLQEKEEEMEALRKNMQFEIDRLTAALADAEARMKAEISRLKKKYQAEIAELEMTVDNLNRANIEAQKTIKKQSEQLKILQASLEDTQRQLQQTLDQYALAQRKVSALSAELEECKVALDNAIRARKQAEIDLEEANARITDLVSINNNLTAIKNKLETELSTAQADLDEATKELHAADERANRALADAARAVEQLHEEQEHSMKIDALRKSLEEQVKQLQVQIQEAEAAALLGGKRVIAKLETRIRDLETALDEETRRHKETQGALRKKDRRIKEVQMQVDEEHKMFVMAQDTADRLLEKLNIQKWQLGEAESLTMANLQRVRRYQRELEDAEGRADQAESSLHLIRAKHRSSVVTGKNASASKIYVL.

Residues 1–9 (AFGSMSVAD) form a nonhelical region region. Residues 10 to 833 (LGSLTRLEDK…HLIRAKHRSS (824 aa)) are a coiled coil. The segment at 834–848 (VVTGKNASASKIYVL) is nonhelical region.

It belongs to the paramyosin family. In terms of assembly, homodimer.

The protein resides in the cytoplasm. It localises to the myofibril. In terms of biological role, paramyosin is a major structural component of many thick filaments isolated from invertebrate muscles. This is Paramyosin from Dirofilaria immitis (Canine heartworm).